The primary structure comprises 210 residues: Probable nicotinate-nucleotide adenylyltransferase (210 aa).

It belongs to the NadD family.

It carries out the reaction nicotinate beta-D-ribonucleotide + ATP + H(+) = deamido-NAD(+) + diphosphate. The protein operates within cofactor biosynthesis; NAD(+) biosynthesis; deamido-NAD(+) from nicotinate D-ribonucleotide: step 1/1. Functionally, catalyzes the reversible adenylation of nicotinate mononucleotide (NaMN) to nicotinic acid adenine dinucleotide (NaAD). In Streptococcus pyogenes serotype M3 (strain ATCC BAA-595 / MGAS315), this protein is Probable nicotinate-nucleotide adenylyltransferase.